We begin with the raw amino-acid sequence, 387 residues long: Cystathionine beta-lyase (387 aa).

An N6-(pyridoxal phosphate)lysine modification is found at lysine 204.

Belongs to the trans-sulfuration enzymes family. As to quaternary structure, homotetramer. Pyridoxal 5'-phosphate serves as cofactor.

It is found in the cytoplasm. It carries out the reaction L,L-cystathionine + H2O = L-homocysteine + pyruvate + NH4(+). The enzyme catalyses an S-substituted L-cysteine + H2O = a thiol + pyruvate + NH4(+). The protein operates within amino-acid biosynthesis; L-methionine biosynthesis via de novo pathway; L-homocysteine from L-cystathionine: step 1/1. Catalyzes the cleavage of cystathionine to homocysteine, pyruvate and ammonia during methionine biosynthesis. In Coxiella burnetii (strain RSA 493 / Nine Mile phase I), this protein is Cystathionine beta-lyase (metC).